A 132-amino-acid chain; its full sequence is Agouti-signaling protein (132 aa).

The first 22 residues, 1–22, serve as a signal peptide directing secretion; sequence MDVTRLLLATLLVFLCFFTVYS. N39 carries an N-linked (GlcNAc...) asparagine glycan. A disordered region spans residues 62–93; sequence ISRKEAEKKRSSKKEASMKKVAQPRTPLSAPC. Basic and acidic residues predominate over residues 63–79; the sequence is SRKEAEKKRSSKKEASM. 5 cysteine pairs are disulfide-bonded: C93-C108, C100-C114, C107-C125, C111-C132, and C116-C123. Residues 93–132 form the Agouti domain; that stretch reads CVATRDSCKPPAPACCDPCASCQCRFFRSACSCRVLSLNC.

The protein localises to the secreted. Functionally, involved in the regulation of melanogenesis. The binding of ASP to MC1R precludes alpha-MSH initiated signaling and thus blocks production of cAMP, leading to a down-regulation of eumelanogenesis (brown/black pigment) and thus increasing synthesis of pheomelanin (yellow/red pigment). The sequence is that of Agouti-signaling protein (ASIP) from Trachypithecus auratus (Javan langur).